A 195-amino-acid chain; its full sequence is HTH-type transcriptional regulator BetI (195 aa).

The HTH tetR-type domain occupies 8-68; the sequence is EIRRAQLIDA…ATMRHVLRDL (61 aa). Positions 31 to 50 form a DNA-binding region, H-T-H motif; that stretch reads TLASVAQRASISTGIVSHYF.

The protein operates within amine and polyamine biosynthesis; betaine biosynthesis via choline pathway [regulation]. In terms of biological role, repressor involved in the biosynthesis of the osmoprotectant glycine betaine. It represses transcription of the choline transporter BetT and the genes of BetAB involved in the synthesis of glycine betaine. The polypeptide is HTH-type transcriptional regulator BetI (Paraburkholderia xenovorans (strain LB400)).